A 2036-amino-acid polypeptide reads, in one-letter code: Transmembrane channel-like protein (2036 aa).

Disordered stretches follow at residues 1 to 178 (MQND…IDDE) and 194 to 243 (SVRG…ESTQ). Over 1–353 (MQNDEEPAAA…GVASYFTFLR (353 aa)) the chain is Cytoplasmic. The span at 58–73 (VGSSSSNGNTSNVATG) shows a compositional bias: low complexity. Positions 74–90 (ANSENNSGVTSPHQLSV) are enriched in polar residues. Residues 125 to 134 (ASQEDHRSYE) show a composition bias toward basic and acidic residues. Residues 166–178 (FDEDGGGGDIDDE) show a composition bias toward acidic residues. Basic residues predominate over residues 198 to 208 (YRGKRGSRSSR). Residues 216-225 (HVLDSVERRR) show a composition bias toward basic and acidic residues. Residues 227–243 (SVYTTSSEEGTNQESTQ) are compositionally biased toward polar residues. The chain crosses the membrane as a helical span at residues 354–374 (WLMWVNIMIAIPLVAFVIGPE). The Extracellular segment spans residues 375–395 (YFATKHGETDPRKRMSDPEAR). A helical transmembrane segment spans residues 396–418 (VAGNLFTFWEFEGYLKYSPMFYG). Residues 419-432 (YYSSTSGISTSGYK) lie on the Cytoplasmic side of the membrane. A helical membrane pass occupies residues 433–453 (LPLAYFLTAVLVYIYSFVATL). At 454 to 526 (RKMAENSRNS…NRNWRVILQR (73 aa)) the chain is on the extracellular side. The chain crosses the membrane as a helical span at residues 527–547 (ILVNILVMGLLGLSGATVVLL). The Cytoplasmic portion of the chain corresponds to 548–567 (VNHSEDLAKHDNWLSRNAVN). The helical transmembrane segment at 568–588 (VTMTLLSFFLPMIFEALGLFE) threads the bilayer. Residues 589–599 (NWHPRQQLRLQ) are Extracellular-facing. A helical membrane pass occupies residues 600–620 (LARIMILNMLNLYSLMFSFIY). Residues 621-1308 (KINSKEKPLQ…ILTLINNQGQ (688 aa)) lie on the Cytoplasmic side of the membrane. Disordered regions lie at residues 789 to 839 (TTAT…TEAT), 860 to 967 (KPLG…TDQA), 996 to 1027 (FFTS…NATP), 1066 to 1143 (LRGR…EGSE), and 1186 to 1205 (GSTT…KQLT). A compositionally biased stretch (polar residues) spans 870–885 (IPNSTTNSATLSTIPA). Residues 886–906 (TLNTTNLPLNSTTKLTTTTST) are compositionally biased toward low complexity. Residues 933-952 (TSDAPDNNSYSDITDYSSEP) are compositionally biased toward polar residues. Acidic residues predominate over residues 953-967 (SEIEDFDEQESTDQA). Low complexity-rich tracts occupy residues 1069 to 1083 (RITT…STTT), 1091 to 1100 (RTTTTELTST), and 1107 to 1130 (TTES…SSST). Residues 1309–1329 (VWMGIFFSPGLVLINLVKLMI) form a helical membrane-spanning segment. The Extracellular portion of the chain corresponds to 1330-1358 (MMYFRSWIVLTCNVPHEVVFKASKSNNFY). A helical transmembrane segment spans residues 1359 to 1379 (LSLLLTMLFLCVLPVGYAIVW). Topologically, residues 1380-1423 (LRPSWHCGPFSEYNRIAEFITNTTRNALPKQLHEPLDYLTSSST) are cytoplasmic. Residues 1424-1444 (VIPLLLLLILIIYYLVSLTGA) form a helical membrane-spanning segment. Residues 1445-2036 (LREANQDLRT…RIDIENEHEK (592 aa)) are Extracellular-facing. 3 disordered regions span residues 1527-1572 (LRKG…SRLQ), 1592-1841 (ERAR…SRQG), and 1859-1990 (KKDD…IPTI). 5 stretches are compositionally biased toward basic and acidic residues: residues 1538-1566 (SFVR…DKRF), 1614-1640 (KETH…DKKD), 1658-1668 (SPKDNEHDPDT), 1727-1743 (HIVD…EDKP), and 1777-1793 (PEPE…ERSS). Residues 1806-1838 (NEPSGTEEQDRSLPSPTPSQGQGHHQRQLSVLS) are compositionally biased toward polar residues. A compositionally biased stretch (low complexity) spans 1890 to 1899 (VLSSVSSSTA). Residues 1903–1914 (PPTPEPESPTPS) are compositionally biased toward pro residues. Positions 1976–1990 (QDSQSSIWSDNIPTI) are enriched in polar residues.

It belongs to the TMC family. Expressed in multi-dendritic neurons of the labellum (md-L), which extend elaborate dendritic arbors innervating the bases of taste hairs (at protein level). In larvae, expressed in class I and class II dendritic arborization (da) neurons and bipolar dendrite (bd) neurons (at protein level). In adults, expressed in various sensory neurons including those in the mouth parts, olfactory neurons in the antenna, wing bristle neurons, haltere neurons, arista neurons, and many other sensory neurons, including a subset of chordotonal (Cho) neurons. Expressed in md-L axon terminals, including those that project into the subesophageal zone (SEZ). Also expressed in a small number of local neurons in the adult ventral nerve cord (VNC), and projections extending from a few neurons in the legs or wing hinges. In the adult mouth, expressed in a few multi-dendritic neurons of the ventral cibarial sensory organ (VCSO); the multiple elaborate dendritic branches form a brush-like structure that faces the luminal side of the food-passing tunnel. Also expressed in the oviduct and uterus of adult females.

The protein localises to the cell membrane. The protein resides in the cell projection. It localises to the dendrite. Probable ion channel. Component of mechanosensitive neurons that participates in proprioception, sensing food texture, and directing egg-laying site selection (oviposition). Component of multi-dendritic neurons of the labellum (md-L) where it is required for sensing the hardness and viscosity of their food, enabling them to behaviorally discriminate their preferred softness and smoothness from harder and stickier food options. Required as part of oviposition site selection process to relay mechanosensory and chemosensory information on the hardness and sweetness of potential egg-laying substrates, thus ensuring females select the most optimal site for their eggs survival. Females determine the softest substrate for their eggs first by making a coarse evaluation of substrate hardness using mechanosensitive channels nan and Piezo in the leg tarsal bristles, followed by a much finer assessment using nan, iav and Tmc mechanosensitive channels on the labellum. This protein is required to sense subtle differences in substrate stiffness (between 0.25% and 0.3% agarose), likely acting in the md-L neurons. Also required in neurons on the labellum, including the md-Ls, and possibly in the brain, to inhibit discrimination of egg-laying substrates of different hardness if the substrate contains sucrose. During oviposition evaluation, activation of sweet neurons by sucrose enhances the activity of the Tmc neurons resulting in females losing their softness preference in favor of egg-laying sites that contain sucrose. Acts in the larvae peripheral sensory neurons, to contribute to proprioception and sensory feedback for normal forward crawling behavior. Required for the normal activity of the proprioceptive sensory dendrites, ddaE which show preferential responses to forward locomotion, and ddaD which show preferential responses to backward locomotion. This is Transmembrane channel-like protein from Drosophila melanogaster (Fruit fly).